Here is a 264-residue protein sequence, read N- to C-terminus: MKKLKLHGFNNLTKSLSFCIYDICYAKTAEERDGYIAYIDELYNANRLTEILSETCSIIGANILNIARQDYEPQGASVTILVSEEPVDPKLIDQTKHPGPLPETVVAHLDKSHICVHTYPESHPEGGLCTFRADIEVSTCGVISPLKALNYLIHQLESDIVTIDYRVRGFTRDVNGMKHFIDHEINSIQNFMSEDMKSLYDMVDVNVYQENIFHTKMLLKEFDLKHYMFHTKPEDLTETERQEITAALWKEMREIYYGRNISAV.

Catalysis depends on S112, which acts as the Schiff-base intermediate with substrate; via pyruvic acid. S112 carries the pyruvic acid (Ser); by autocatalysis modification. The Proton acceptor; for processing activity role is filled by H117. C140 functions as the Proton donor; for catalytic activity in the catalytic mechanism.

It belongs to the prokaryotic AdoMetDC family. Type 2 subfamily. In terms of assembly, heterooctamer of four alpha and four beta chains arranged as a tetramer of alpha/beta heterodimers. Pyruvate serves as cofactor. Is synthesized initially as an inactive proenzyme. Formation of the active enzyme involves a self-maturation process in which the active site pyruvoyl group is generated from an internal serine residue via an autocatalytic post-translational modification. Two non-identical subunits are generated from the proenzyme in this reaction, and the pyruvate is formed at the N-terminus of the alpha chain, which is derived from the carboxyl end of the proenzyme. The post-translation cleavage follows an unusual pathway, termed non-hydrolytic serinolysis, in which the side chain hydroxyl group of the serine supplies its oxygen atom to form the C-terminus of the beta chain, while the remainder of the serine residue undergoes an oxidative deamination to produce ammonia and the pyruvoyl group blocking the N-terminus of the alpha chain.

The catalysed reaction is S-adenosyl-L-methionine + H(+) = S-adenosyl 3-(methylsulfanyl)propylamine + CO2. Its pathway is amine and polyamine biosynthesis; S-adenosylmethioninamine biosynthesis; S-adenosylmethioninamine from S-adenosyl-L-methionine: step 1/1. In terms of biological role, catalyzes the decarboxylation of S-adenosylmethionine to S-adenosylmethioninamine (dcAdoMet), the propylamine donor required for the synthesis of the polyamines spermine and spermidine from the diamine putrescine. The polypeptide is S-adenosylmethionine decarboxylase proenzyme (Salmonella choleraesuis (strain SC-B67)).